We begin with the raw amino-acid sequence, 214 residues long: Large ribosomal subunit protein uL3 (214 aa).

Gln-155 carries the N5-methylglutamine modification.

Belongs to the universal ribosomal protein uL3 family. Part of the 50S ribosomal subunit. Forms a cluster with proteins L14 and L19. Methylated by PrmB.

In terms of biological role, one of the primary rRNA binding proteins, it binds directly near the 3'-end of the 23S rRNA, where it nucleates assembly of the 50S subunit. The protein is Large ribosomal subunit protein uL3 of Acinetobacter baumannii (strain ACICU).